The following is a 261-amino-acid chain: MSDSISVIREKLNQVTSEHDPFFQKCMQDERKGVEKLLQTTRRKWEKEAQLRNKLEEMKQYETDLFQQGYKYIAGVDEVGRGPLAGPVVAAAVILPDDFSVVGINDSKQLSEAKRDALYETIQTEAIAVGVGIIEHNVIDQVNIYEATKLAMRAALDQLQPEPDFVLIDAMPLKYTEAELSLIKGDTKSISIAAASIIAKVTRDRLMQMYDEKYPGYDFANNMGYGTKKHLHGLDTIGICPIHRISFAPVKEAKLHFDSLK.

Residues 71–259 enclose the RNase H type-2 domain; sequence KYIAGVDEVG…VKEAKLHFDS (189 aa). Positions 77, 78, and 169 each coordinate a divalent metal cation.

It belongs to the RNase HII family. Mn(2+) is required as a cofactor. The cofactor is Mg(2+).

The protein localises to the cytoplasm. It catalyses the reaction Endonucleolytic cleavage to 5'-phosphomonoester.. In terms of biological role, endonuclease that specifically degrades the RNA of RNA-DNA hybrids. The polypeptide is Ribonuclease HII (Listeria monocytogenes serotype 4a (strain HCC23)).